Here is a 600-residue protein sequence, read N- to C-terminus: Adenine deaminase (600 aa).

Belongs to the metallo-dependent hydrolases superfamily. Adenine deaminase family. Mn(2+) serves as cofactor.

It carries out the reaction adenine + H2O + H(+) = hypoxanthine + NH4(+). The chain is Adenine deaminase from Chelativorans sp. (strain BNC1).